The following is a 282-amino-acid chain: Phosphatidylserine decarboxylase proenzyme (282 aa).

Active-site charge relay system; for autoendoproteolytic cleavage activity residues include Asp88, His144, and Ser247. Residue Ser247 is the Schiff-base intermediate with substrate; via pyruvic acid; for decarboxylase activity of the active site. Ser247 is subject to Pyruvic acid (Ser); by autocatalysis.

This sequence belongs to the phosphatidylserine decarboxylase family. PSD-B subfamily. Prokaryotic type I sub-subfamily. Heterodimer of a large membrane-associated beta subunit and a small pyruvoyl-containing alpha subunit. Pyruvate serves as cofactor. Is synthesized initially as an inactive proenzyme. Formation of the active enzyme involves a self-maturation process in which the active site pyruvoyl group is generated from an internal serine residue via an autocatalytic post-translational modification. Two non-identical subunits are generated from the proenzyme in this reaction, and the pyruvate is formed at the N-terminus of the alpha chain, which is derived from the carboxyl end of the proenzyme. The autoendoproteolytic cleavage occurs by a canonical serine protease mechanism, in which the side chain hydroxyl group of the serine supplies its oxygen atom to form the C-terminus of the beta chain, while the remainder of the serine residue undergoes an oxidative deamination to produce ammonia and the pyruvoyl prosthetic group on the alpha chain. During this reaction, the Ser that is part of the protease active site of the proenzyme becomes the pyruvoyl prosthetic group, which constitutes an essential element of the active site of the mature decarboxylase.

Its subcellular location is the cell membrane. It catalyses the reaction a 1,2-diacyl-sn-glycero-3-phospho-L-serine + H(+) = a 1,2-diacyl-sn-glycero-3-phosphoethanolamine + CO2. It functions in the pathway phospholipid metabolism; phosphatidylethanolamine biosynthesis; phosphatidylethanolamine from CDP-diacylglycerol: step 2/2. Its function is as follows. Catalyzes the formation of phosphatidylethanolamine (PtdEtn) from phosphatidylserine (PtdSer). The protein is Phosphatidylserine decarboxylase proenzyme of Xanthomonas oryzae pv. oryzae (strain MAFF 311018).